Consider the following 177-residue polypeptide: Chorismate pyruvate-lyase (177 aa).

Residues M37, R79, L117, and E159 each coordinate substrate.

The protein belongs to the UbiC family. In terms of assembly, monomer.

Its subcellular location is the cytoplasm. It catalyses the reaction chorismate = 4-hydroxybenzoate + pyruvate. Its pathway is cofactor biosynthesis; ubiquinone biosynthesis. Removes the pyruvyl group from chorismate, with concomitant aromatization of the ring, to provide 4-hydroxybenzoate (4HB) for the ubiquinone pathway. The protein is Chorismate pyruvate-lyase of Sodalis glossinidius (strain morsitans).